A 159-amino-acid polypeptide reads, in one-letter code: Ribosomal RNA large subunit methyltransferase H (159 aa).

Residues Leu-76, Gly-108, and 127–132 (FGKLTM) each bind S-adenosyl-L-methionine.

The protein belongs to the RNA methyltransferase RlmH family. In terms of assembly, homodimer.

It is found in the cytoplasm. It catalyses the reaction pseudouridine(1915) in 23S rRNA + S-adenosyl-L-methionine = N(3)-methylpseudouridine(1915) in 23S rRNA + S-adenosyl-L-homocysteine + H(+). Functionally, specifically methylates the pseudouridine at position 1915 (m3Psi1915) in 23S rRNA. The protein is Ribosomal RNA large subunit methyltransferase H of Lacticaseibacillus casei (strain BL23) (Lactobacillus casei).